Consider the following 761-residue polypeptide: Phosphoribosylformylglycinamidine synthase subunit PurL (761 aa).

His48 is an active-site residue. Tyr51 and Lys90 together coordinate ATP. Glu92 is a binding site for Mg(2+). Substrate-binding positions include 93–96 (SHNH) and Arg115. His94 functions as the Proton acceptor in the catalytic mechanism. Asp116 serves as a coordination point for Mg(2+). A substrate-binding site is contributed by Gln239. Residue Asp267 coordinates Mg(2+). 311–313 (ESQ) serves as a coordination point for substrate. Positions 499 and 536 each coordinate ATP. Asn537 is a Mg(2+) binding site. Residue Ser539 participates in substrate binding.

Belongs to the FGAMS family. Monomer. Part of the FGAM synthase complex composed of 1 PurL, 1 PurQ and 2 PurS subunits.

Its subcellular location is the cytoplasm. The enzyme catalyses N(2)-formyl-N(1)-(5-phospho-beta-D-ribosyl)glycinamide + L-glutamine + ATP + H2O = 2-formamido-N(1)-(5-O-phospho-beta-D-ribosyl)acetamidine + L-glutamate + ADP + phosphate + H(+). The protein operates within purine metabolism; IMP biosynthesis via de novo pathway; 5-amino-1-(5-phospho-D-ribosyl)imidazole from N(2)-formyl-N(1)-(5-phospho-D-ribosyl)glycinamide: step 1/2. Functionally, part of the phosphoribosylformylglycinamidine synthase complex involved in the purines biosynthetic pathway. Catalyzes the ATP-dependent conversion of formylglycinamide ribonucleotide (FGAR) and glutamine to yield formylglycinamidine ribonucleotide (FGAM) and glutamate. The FGAM synthase complex is composed of three subunits. PurQ produces an ammonia molecule by converting glutamine to glutamate. PurL transfers the ammonia molecule to FGAR to form FGAM in an ATP-dependent manner. PurS interacts with PurQ and PurL and is thought to assist in the transfer of the ammonia molecule from PurQ to PurL. In Thermosynechococcus vestitus (strain NIES-2133 / IAM M-273 / BP-1), this protein is Phosphoribosylformylglycinamidine synthase subunit PurL.